A 670-amino-acid polypeptide reads, in one-letter code: tRNA 5-methylaminomethyl-2-thiouridine biosynthesis bifunctional protein MnmC (670 aa).

A tRNA (mnm(5)s(2)U34)-methyltransferase region spans residues 1–242 (MTFSVQHAEI…KRECLSGLKI (242 aa)). Residues 269 to 670 (IGGGIASLCA…KKWLKGSKVE (402 aa)) are FAD-dependent cmnm(5)s(2)U34 oxidoreductase.

It in the N-terminal section; belongs to the methyltransferase superfamily. tRNA (mnm(5)s(2)U34)-methyltransferase family. The protein in the C-terminal section; belongs to the DAO family. FAD serves as cofactor.

The protein resides in the cytoplasm. The catalysed reaction is 5-aminomethyl-2-thiouridine(34) in tRNA + S-adenosyl-L-methionine = 5-methylaminomethyl-2-thiouridine(34) in tRNA + S-adenosyl-L-homocysteine + H(+). Its function is as follows. Catalyzes the last two steps in the biosynthesis of 5-methylaminomethyl-2-thiouridine (mnm(5)s(2)U) at the wobble position (U34) in tRNA. Catalyzes the FAD-dependent demodification of cmnm(5)s(2)U34 to nm(5)s(2)U34, followed by the transfer of a methyl group from S-adenosyl-L-methionine to nm(5)s(2)U34, to form mnm(5)s(2)U34. The polypeptide is tRNA 5-methylaminomethyl-2-thiouridine biosynthesis bifunctional protein MnmC (Haemophilus influenzae (strain PittGG)).